A 203-amino-acid chain; its full sequence is Glycerol-3-phosphate acyltransferase (203 aa).

Transmembrane regions (helical) follow at residues 3–23 (ILLA…VVVS), 51–71 (KAAI…VWLV), 74–94 (FGIG…LGHL), 116–136 (AVHP…AFFF), 140–160 (SLAA…LFGT), and 164–178 (PVAW…LLIW).

This sequence belongs to the PlsY family. In terms of assembly, probably interacts with PlsX.

The protein resides in the cell inner membrane. It catalyses the reaction an acyl phosphate + sn-glycerol 3-phosphate = a 1-acyl-sn-glycero-3-phosphate + phosphate. It participates in lipid metabolism; phospholipid metabolism. In terms of biological role, catalyzes the transfer of an acyl group from acyl-phosphate (acyl-PO(4)) to glycerol-3-phosphate (G3P) to form lysophosphatidic acid (LPA). This enzyme utilizes acyl-phosphate as fatty acyl donor, but not acyl-CoA or acyl-ACP. The sequence is that of Glycerol-3-phosphate acyltransferase from Burkholderia pseudomallei (strain 1710b).